A 206-amino-acid polypeptide reads, in one-letter code: Sclerostin domain-containing protein 1 (206 aa).

A signal peptide spans Met-1–Ser-22. Residues Ala-40–Asn-68 form a disordered region. Positions Ser-43–Arg-54 are enriched in polar residues. Asn-47 carries N-linked (GlcNAc...) asparagine glycosylation. 4 disulfide bridges follow: Cys-75–Cys-133, Cys-89–Cys-147, Cys-100–Cys-163, and Cys-104–Cys-165. Residues Cys-75–Arg-170 enclose the CTCK domain. Asn-173 carries an N-linked (GlcNAc...) asparagine glycan. Positions Ser-176 to Ser-206 are disordered. Residues Val-188–Ser-206 show a composition bias toward basic residues.

This sequence belongs to the sclerostin family. Interacts with LRP6.

Its subcellular location is the secreted. In terms of biological role, can activate or inhibit Wnt signaling in a context-dependent manner. Activates the canonical Wnt pathway whereby acts through Disheveled proteins and beta-catenin. Antagonises Wnt signaling through the canonical pathways presumably by blocking accessibility of certain WNTs to their receptors. Induces posterior neural markers via components of the canonical Wnt pathway. This Gallus gallus (Chicken) protein is Sclerostin domain-containing protein 1 (SOSTDC1).